The following is a 423-amino-acid chain: MVFQGLSPTFVGSLSDTIGRRPVYIFCFVTYIAANVGLALSNSFIALLLLRCLQSTGSSSTVNLAYGVTADVVTSAERGRYIGLASVGPIIGPSLGPVLGGVITQYLGWRYIFVILAAAALIFLFLLIIFFPETCRNLVGNGSIPPKSLWNRSLVSLFKKGSKLEDHASGRNLPNAGSKKSNPRNTNPLKALNVLFEYPTSPVIIFNGLSYAIYYAITSSLSYSFHDNYYFDDIHVGLSYIPIGVGTIIAALGNGFVVDWNYRRLANKAGIDIDQGRHMDYETGKRLGFSIEKARLQIAVPAVVVACISMLGYAWTMSLRLPPIIPLLCLFVFGWGGTAAYSCMNVLIVDINYSSAASATAANNLVRCLLGAGGAAVIMPLINVLGMGWTFTAIAGLWVLLSPLVLFLLFRREEVYDEISDSE.

Helical transmembrane passes span 25 to 45 (IFCF…NSFI), 82 to 102 (IGLA…LGGV), and 111 to 131 (YIFV…IIFF). N-linked (GlcNAc...) asparagine glycans are attached at residues Asn-141 and Asn-151. The tract at residues 166–185 (DHASGRNLPNAGSKKSNPRN) is disordered. Transmembrane regions (helical) follow at residues 203 to 223 (VIIF…SLSY), 238 to 258 (LSYI…GFVV), 298 to 318 (IAVP…WTMS), and 321 to 341 (LPPI…TAAY). An N-linked (GlcNAc...) asparagine glycan is attached at Asn-352. The next 2 helical transmembrane spans lie at 369–389 (LLGA…GMGW) and 390–410 (TFTA…FLLF).

Belongs to the major facilitator superfamily. CAR1 family.

Its subcellular location is the membrane. In terms of biological role, MFS-type transporter; part of the gene cluster that mediates the biosynthesis of the antihypercholesterolemic agents phomoidrides which are dimeric anhydrides. The chain is MFS-type transporter phiL from Fungal sp. (strain ATCC 74256).